A 171-amino-acid polypeptide reads, in one-letter code: Co-chaperone protein HscB (171 aa).

The 73-residue stretch at 2-74 (DYFTLFGLPA…LMRAEYLLSL (73 aa)) folds into the J domain.

It belongs to the HscB family. As to quaternary structure, interacts with HscA and stimulates its ATPase activity. Interacts with IscU.

Functionally, co-chaperone involved in the maturation of iron-sulfur cluster-containing proteins. Seems to help targeting proteins to be folded toward HscA. The polypeptide is Co-chaperone protein HscB (Escherichia coli (strain SE11)).